Here is a 438-residue protein sequence, read N- to C-terminus: Putative cytochrome P450 140 (438 aa).

Cys-381 contributes to the heme binding site.

It belongs to the cytochrome P450 family. The cofactor is heme.

The chain is Putative cytochrome P450 140 (cyp140) from Mycobacterium bovis (strain ATCC BAA-935 / AF2122/97).